The chain runs to 185 residues: Ribosome-recycling factor (185 aa).

Belongs to the RRF family.

The protein resides in the cytoplasm. In terms of biological role, responsible for the release of ribosomes from messenger RNA at the termination of protein biosynthesis. May increase the efficiency of translation by recycling ribosomes from one round of translation to another. The protein is Ribosome-recycling factor of Pseudomonas fluorescens (strain Pf0-1).